We begin with the raw amino-acid sequence, 313 residues long: Probable cell division protein WhiA (313 aa).

The H-T-H motif DNA-binding region spans 277-311 (SLKEVAAQVPDGPISKSGVNHRFQKIREIAKQLKE).

This sequence belongs to the WhiA family.

Its function is as follows. Involved in cell division and chromosome segregation. In Lactobacillus johnsonii (strain CNCM I-12250 / La1 / NCC 533), this protein is Probable cell division protein WhiA.